The chain runs to 258 residues: Cytosolic Fe-S cluster assembly factor Nubp2 homolog (258 aa).

14 to 21 (GKGGVGKS) serves as a coordination point for ATP. The [4Fe-4S] cluster site is built by Cys188 and Cys191.

The protein belongs to the Mrp/NBP35 ATP-binding proteins family. NUBP2/CFD1 subfamily. As to quaternary structure, heterotetramer of 2 Nubp1 and 2 Nubp2 chains. [4Fe-4S] cluster is required as a cofactor.

It is found in the cytoplasm. Its function is as follows. Component of the cytosolic iron-sulfur (Fe/S) protein assembly (CIA) machinery. Required for maturation of extramitochondrial Fe-S proteins. The Nubp1-Nubp2 heterotetramer forms a Fe-S scaffold complex, mediating the de novo assembly of an Fe-S cluster and its transfer to target apoproteins. This is Cytosolic Fe-S cluster assembly factor Nubp2 homolog from Drosophila pseudoobscura pseudoobscura (Fruit fly).